We begin with the raw amino-acid sequence, 200 residues long: Thymidylate kinase (200 aa).

10 to 17 is a binding site for ATP; that stretch reads GIDGAGKS.

The protein belongs to the thymidylate kinase family.

It catalyses the reaction dTMP + ATP = dTDP + ADP. Its function is as follows. Phosphorylation of dTMP to form dTDP in both de novo and salvage pathways of dTTP synthesis. This is Thymidylate kinase from Cupriavidus metallidurans (strain ATCC 43123 / DSM 2839 / NBRC 102507 / CH34) (Ralstonia metallidurans).